A 1755-amino-acid chain; its full sequence is Transposon Ty1-ML2 Gag-Pol polyprotein (1755 aa).

Low complexity predominate over residues 1–16 (MESQQLSQHSHISHGS). Disordered stretches follow at residues 1–93 (MESQ…MMTQ), 126–173 (PQSQ…RPPP), and 352–421 (GSRN…SKST). Polar residues-rich tracts occupy residues 48 to 60 (TKAN…TPAS) and 127 to 152 (QSQF…GNTF). Over residues 153 to 165 (TDSSSADSDMTST) the composition is skewed to low complexity. The segment at 299–401 (NNGIHINNKV…NSKSKTARAH (103 aa)) is RNA-binding. Positions 402 to 418 (NVSTSNNSPSTDNDSIS) are enriched in low complexity. Ser-416 bears the Phosphoserine mark. Asp-461 (for protease activity; shared with dimeric partner) is an active-site residue. The integrase-type zinc finger-like stretch occupies residues 583–640 (NVHTSESTRKYPYPFIHRMLAHANAQTIRYSLKNNTITYFNESDVDRSSAIDYQCPDC). Positions 660–835 (NSYEPFQYLH…AGLDISTLLP (176 aa)) constitute an Integrase catalytic domain. Positions 671 and 736 each coordinate Mg(2+). Disordered regions lie at residues 956–1087 (SKAV…ETEK), 1092–1111 (RSPS…NIVP), and 1130–1171 (DLPL…DSNA). Over residues 960-969 (SPTDSTPPST) the composition is skewed to low complexity. Over residues 1005–1015 (STPQISNIEST) the composition is skewed to polar residues. Positions 1038–1053 (ESSHASKSKDFRHSDS) are enriched in basic and acidic residues. Composition is skewed to polar residues over residues 1054-1082 (YSEN…QISD) and 1101-1111 (PENNSSHNIVP). A Bipartite nuclear localization signal motif is present at residues 1178 to 1212 (KKRSLEDNETEIKVSRDTWNTKNMRSLEPPRSKKR). Residues 1338–1476 (NNYYITQLDI…DILGLEIKYQ (139 aa)) enclose the Reverse transcriptase Ty1/copia-type domain. Residues Asp-1346, Asp-1427, Asp-1428, Asp-1610, Glu-1652, and Asp-1685 each contribute to the Mg(2+) site. The region spanning 1610–1752 (DASYGNQPYY…IKTFKLLTNK (143 aa)) is the RNase H Ty1/copia-type domain.

The capsid protein forms a homotrimer, from which the VLPs are assembled. The protease is a homodimer, whose active site consists of two apposed aspartic acid residues. Post-translationally, initially, virus-like particles (VLPs) are composed of the structural unprocessed proteins Gag and Gag-Pol, and also contain the host initiator methionine tRNA (tRNA(i)-Met) which serves as a primer for minus-strand DNA synthesis, and a dimer of genomic Ty RNA. Processing of the polyproteins occurs within the particle and proceeds by an ordered pathway, called maturation. First, the protease (PR) is released by autocatalytic cleavage of the Gag-Pol polyprotein yielding capsid protein p45 and a Pol-p154 precursor protein. This cleavage is a prerequisite for subsequent processing of Pol-p154 at the remaining sites to release the mature structural and catalytic proteins. Maturation takes place prior to the RT reaction and is required to produce transposition-competent VLPs.

It is found in the cytoplasm. The protein localises to the nucleus. The catalysed reaction is DNA(n) + a 2'-deoxyribonucleoside 5'-triphosphate = DNA(n+1) + diphosphate. It catalyses the reaction Endonucleolytic cleavage to 5'-phosphomonoester.. Capsid protein (CA) is the structural component of the virus-like particle (VLP), forming the shell that encapsulates the retrotransposons dimeric RNA genome. The particles are assembled from trimer-clustered units and there are holes in the capsid shells that allow for the diffusion of macromolecules. CA also has nucleocapsid-like chaperone activity, promoting primer tRNA(i)-Met annealing to the multipartite primer-binding site (PBS), dimerization of Ty1 RNA and initiation of reverse transcription. Functionally, the aspartyl protease (PR) mediates the proteolytic cleavages of the Gag and Gag-Pol polyproteins after assembly of the VLP. Its function is as follows. Reverse transcriptase/ribonuclease H (RT) is a multifunctional enzyme that catalyzes the conversion of the retro-elements RNA genome into dsDNA within the VLP. The enzyme displays a DNA polymerase activity that can copy either DNA or RNA templates, and a ribonuclease H (RNase H) activity that cleaves the RNA strand of RNA-DNA heteroduplexes during plus-strand synthesis and hydrolyzes RNA primers. The conversion leads to a linear dsDNA copy of the retrotransposon that includes long terminal repeats (LTRs) at both ends. In terms of biological role, integrase (IN) targets the VLP to the nucleus, where a subparticle preintegration complex (PIC) containing at least integrase and the newly synthesized dsDNA copy of the retrotransposon must transit the nuclear membrane. Once in the nucleus, integrase performs the integration of the dsDNA into the host genome. In Saccharomyces cerevisiae (strain ATCC 204508 / S288c) (Baker's yeast), this protein is Transposon Ty1-ML2 Gag-Pol polyprotein (TY1B-ML2).